Here is a 343-residue protein sequence, read N- to C-terminus: Galactoside alpha-(1,2)-fucosyltransferase 2 (343 aa).

Topologically, residues 1 to 14 (MLVVQMPFSFPMAH) are cytoplasmic. A helical; Signal-anchor for type II membrane protein transmembrane segment spans residues 15-28 (FILFVFTVSTIFHV). Topologically, residues 29–343 (QQRLAKIQAM…AADLSPLLKH (315 aa)) are lumenal. N-linked (GlcNAc...) asparagine glycans are attached at residues Asn188, Asn282, and Asn308.

Belongs to the glycosyltransferase 11 family.

The protein localises to the golgi apparatus. Its subcellular location is the golgi stack membrane. The enzyme catalyses a beta-D-galactosyl-(1-&gt;3)-N-acetyl-beta-D-glucosaminyl derivative + GDP-beta-L-fucose = an alpha-L-Fuc-(1-&gt;2)-beta-D-Gal-(1-&gt;3)-beta-D-GlcNAc derivative + GDP + H(+). It catalyses the reaction a beta-D-galactosyl-(1-&gt;4)-N-acetyl-beta-D-glucosaminyl derivative + GDP-beta-L-fucose = an alpha-L-Fuc-(1-&gt;2)-beta-D-Gal-(1-&gt;4)-beta-D-GlcNAc derivative + GDP + H(+). It carries out the reaction a neolactoside nLc4Cer + GDP-beta-L-fucose = a neolactoside IV(2)-alpha-Fuc-nLc4Cer + GDP + H(+). The catalysed reaction is a neolactoside nLc4Cer(d18:1(4E)) + GDP-beta-L-fucose = a neolactoside IV(2)-alpha-Fuc-nLc4Cer(d18:1(4E)) + GDP + H(+). The enzyme catalyses a ganglioside GM1 + GDP-beta-L-fucose = a ganglioside Fuc-GM1 + GDP + H(+). It catalyses the reaction a ganglioside GA1 + GDP-beta-L-fucose = a ganglioside Fuc-GA1 + GDP + H(+). It carries out the reaction Lc4Cer + GDP-beta-L-fucose = alpha-L-fucosyl-(1-&gt;2)-beta-D-galactosyl-(1-&gt;3)-N-acetyl-beta-D-glucosaminyl-(1-&gt;3)-beta-D-galactosyl-(1-&gt;4)-beta-D-glucosyl-(1&lt;-&gt;1')-ceramide + GDP + H(+). The catalysed reaction is a beta-D-Gal-(1-&gt;3)-beta-D-GlcNAc-(1-&gt;3)-beta-D-Gal-(1-&gt;4)-beta-D-Glc-(1&lt;-&gt;1')-Cer(d18:1(4E)) + GDP-beta-L-fucose = alpha-L-fucosyl-(1-&gt;2)- beta-D-galactosyl-(1-&gt;3)-N-acetyl-beta-D-glucosaminyl-(1-&gt;3)-beta-D-galactosyl-(1-&gt;4)-beta-D-glucosyl-(1&lt;-&gt;1')-N-acylsphing-4-enine + GDP + H(+). The enzyme catalyses a ganglioside GD1b + GDP-beta-L-fucose = a ganglioside Fuc-GD1b + GDP + H(+). It catalyses the reaction a ganglioside GM1 (d18:1(4E)) + GDP-beta-L-fucose = a ganglioside Fuc-GM1 (d18:1(4E)) + GDP + H(+). It carries out the reaction a globoside GalGb4Cer (d18:1(4E)) + GDP-beta-L-fucose = a globoside Globo-H (d18:1(4E)) + GDP + H(+). The catalysed reaction is a lactoside III(4)-a-Fuc-Lc4Cer + GDP-beta-L-fucose = a lactoside IV(2),III(4)-a-[Fuc]2-Lc4Cer + GDP + H(+). The enzyme catalyses beta-D-galactosyl-(1-&gt;3)-N-acetyl-D-galactosamine + GDP-beta-L-fucose = alpha-L-fucosyl-(1-&gt;2)-beta-D-galactosyl-(1-&gt;3)-N-acetyl-D-galactosamine + GDP + H(+). Its pathway is protein modification; protein glycosylation. Catalyzes the transfer of L-fucose, from a guanosine diphosphate-beta-L-fucose, to the terminal galactose on both O- and N-linked glycans chains of cell surface glycoproteins and glycolipids and the resulting epitope regulates several processes such as cell-cell interaction including host-microbe interaction, cell surface expression and cell proliferation. Preferentially fucosylates gangliosides GA1 and GM1 in the antrum, cecum and colon and in the female reproductive organs. Fucosylated host glycoproteins or glycolipids mediate interaction with intestinal microbiota influencing its composition. Creates a soluble precursor oligosaccharide FuC-alpha ((1,2)Galbeta-) called the H antigen which is an essential substrate for the final step in the soluble ABO blood group antigen synthesis pathway. The sequence is that of Galactoside alpha-(1,2)-fucosyltransferase 2 from Hylobates lar (Lar gibbon).